Reading from the N-terminus, the 212-residue chain is Uridine kinase (212 aa).

13–20 serves as a coordination point for ATP; that stretch reads GGSGSGKT.

It belongs to the uridine kinase family.

Its subcellular location is the cytoplasm. It catalyses the reaction uridine + ATP = UMP + ADP + H(+). The enzyme catalyses cytidine + ATP = CMP + ADP + H(+). Its pathway is pyrimidine metabolism; CTP biosynthesis via salvage pathway; CTP from cytidine: step 1/3. It participates in pyrimidine metabolism; UMP biosynthesis via salvage pathway; UMP from uridine: step 1/1. The chain is Uridine kinase from Bacillus cereus (strain B4264).